The following is a 230-amino-acid chain: Ion-translocating oxidoreductase complex subunit E (230 aa).

Topologically, residues 1 to 17 (MSENRTLMLNGMWNNNP) are cytoplasmic. The next 2 membrane-spanning stretches (helical) occupy residues 18–38 (ALVQ…VTNA) and 39–59 (LGLG…VSLV). The Cytoplasmic portion of the chain corresponds to 60–68 (RDYVPKEVR). The chain crosses the membrane as a helical span at residues 69-89 (IPVFVMIIASLVTCVQLLMNA). The Periplasmic segment spans residues 90–92 (YAY). A helical transmembrane segment spans residues 93 to 113 (GLYLSLGIFIPLIVTNCIIIG). Residues 114-123 (RAEAFASKND) are Cytoplasmic-facing. The helical transmembrane segment at 124–144 (VLPAALDGFWMGLGMTSVLVV) threads the bilayer. Topologically, residues 145–181 (LGSLREIIGNGTLFDGADLLLGEWAKVLRIEVFHFDS) are periplasmic. Residues 182–202 (AFLLALLPPGAFIGVGFLIAA) form a helical membrane-spanning segment. At 203 to 230 (KSVIDKQIAARQPKQQKQAIERARVTNV) the chain is on the cytoplasmic side.

It belongs to the NqrDE/RnfAE family. In terms of assembly, the complex is composed of six subunits: RnfA, RnfB, RnfC, RnfD, RnfE and RnfG.

It is found in the cell inner membrane. Functionally, part of a membrane-bound complex that couples electron transfer with translocation of ions across the membrane. The polypeptide is Ion-translocating oxidoreductase complex subunit E (Vibrio cholerae serotype O1 (strain ATCC 39541 / Classical Ogawa 395 / O395)).